A 305-amino-acid polypeptide reads, in one-letter code: Secreted mono- and diacylglycerol lipase A (305 aa).

An N-terminal signal peptide occupies residues 1-26; it reads MRLSFFTALSAVASLGYALPGKLQSR. Cystine bridges form between cysteine 62-cysteine 67 and cysteine 129-cysteine 132. Serine 171 acts as the Nucleophile in catalysis. Aspartate 225 (charge relay system) is an active-site residue. A glycan (N-linked (GlcNAc...) asparagine) is linked at asparagine 251. Catalysis depends on histidine 285, which acts as the Charge relay system. Positions 303–305 are cleaved as a propeptide — removed in mature form; the sequence is KRV.

The protein belongs to the AB hydrolase superfamily. Lipase family. Class 3 subfamily. In terms of processing, multiple forms of this lipase are due to the presence of different carbohydrates, which may contribute to the stability of this lipase but not to the enzyme activity.

The protein localises to the secreted. The catalysed reaction is a monoacylglycerol + H2O = glycerol + a fatty acid + H(+). It carries out the reaction a diacylglycerol + H2O = a monoacylglycerol + a fatty acid + H(+). Its activity is regulated as follows. Both Fe(3+) and Hg(2+) inhibit the activity significantly. In terms of biological role, secreted lipase strictly specific to mono- and diacylglycerol, but not triacylglycerol. Hydrolyzes long-chain monoacylglycerols most efficiently with the highest activities observed on 1- and 3- monopalmitoyl-sn-glycerol or 1-monostearoyl-rac-glycerol. Prefers to attack alpha positions to beta positions of monoacylglycerol, but shows no stereospecificity on mono- and diacylglycerol. In Penicillium camembertii, this protein is Secreted mono- and diacylglycerol lipase A.